A 291-amino-acid chain; its full sequence is Nucleoid occlusion protein (291 aa).

Residues 155–174 (EALAQRLGKGQSTVANKLRL) constitute a DNA-binding region (H-T-H motif).

This sequence belongs to the ParB family.

The protein resides in the cytoplasm. Its subcellular location is the nucleoid. In terms of biological role, effects nucleoid occlusion by binding relatively nonspecifically to DNA and preventing the assembly of the division machinery in the vicinity of the nucleoid, especially under conditions that disturb the cell cycle. It helps to coordinate cell division and chromosome segregation by preventing the formation of the Z ring through the nucleoid, which would cause chromosome breakage. In Bacillus pumilus (strain SAFR-032), this protein is Nucleoid occlusion protein.